A 62-amino-acid polypeptide reads, in one-letter code: Large ribosomal subunit protein uL29 (62 aa).

Belongs to the universal ribosomal protein uL29 family.

The polypeptide is Large ribosomal subunit protein uL29 (Desulfatibacillum aliphaticivorans).